The sequence spans 548 residues: Guanine nucleotide-binding protein-like 3 (548 aa).

Basic residues predominate over residues 1–45 (MKRPKLKKGSKRLSCHKRYKIQKKVREHNRKARKEAKKSGTRKQK). The interval 1–118 (MKRPKLKKGS…KKNKGTKAAE (118 aa)) is disordered. Residues 58–114 (AEILQEAQRRRQQEEELKQNRKLERQKEVAKRRKLDEKKKKNSEKREKRDNKKNKGT) adopt a coiled-coil conformation. Over residues 64-107 (AQRRRQQEEELKQNRKLERQKEVAKRRKLDEKKKKNSEKREKRD) the composition is skewed to basic and acidic residues. Residues 125-305 (CRHVNKVLEQ…MLDSPALVVS (181 aa)) form the CP-type G domain. GTP contacts are provided by residues 172–175 (NKAD), 256–263 (ANVGKSSV), and 298–301 (DSPA). Residues 459-548 (RQLVEPEPIE…DAYDFNTDFV (90 aa)) form a disordered region. The segment covering 465 to 497 (EPIEEELEANDGEEDVEEEHEGSEEEEDEEVEQ) has biased composition (acidic residues). The segment covering 501-523 (SAKEQEVVSAKEQEVVSAKEQDS) has biased composition (basic and acidic residues). Over residues 524 to 534 (KSAGPSVSFDQ) the composition is skewed to polar residues.

It belongs to the TRAFAC class YlqF/YawG GTPase family.

It is found in the nucleus. The protein resides in the nucleolus. Its function is as follows. May play a role in regulating cellular proliferation. This chain is Guanine nucleotide-binding protein-like 3 (gnl3), found in Xenopus tropicalis (Western clawed frog).